A 238-amino-acid chain; its full sequence is Uridylate kinase (238 aa).

Residue 12-15 (KLSG) participates in ATP binding. G54 lines the UMP pocket. 2 residues coordinate ATP: G55 and R59. UMP-binding positions include D74 and 135-142 (TGNPFFTT). ATP contacts are provided by T162, Y168, and D171.

This sequence belongs to the UMP kinase family. As to quaternary structure, homohexamer.

It localises to the cytoplasm. The catalysed reaction is UMP + ATP = UDP + ADP. It functions in the pathway pyrimidine metabolism; CTP biosynthesis via de novo pathway; UDP from UMP (UMPK route): step 1/1. With respect to regulation, inhibited by UTP. In terms of biological role, catalyzes the reversible phosphorylation of UMP to UDP. This chain is Uridylate kinase, found in Nitrosospira multiformis (strain ATCC 25196 / NCIMB 11849 / C 71).